A 473-amino-acid polypeptide reads, in one-letter code: Aspartyl/glutamyl-tRNA(Asn/Gln) amidotransferase subunit B (473 aa).

Belongs to the GatB/GatE family. GatB subfamily. As to quaternary structure, heterotrimer of A, B and C subunits.

It catalyses the reaction L-glutamyl-tRNA(Gln) + L-glutamine + ATP + H2O = L-glutaminyl-tRNA(Gln) + L-glutamate + ADP + phosphate + H(+). The catalysed reaction is L-aspartyl-tRNA(Asn) + L-glutamine + ATP + H2O = L-asparaginyl-tRNA(Asn) + L-glutamate + ADP + phosphate + 2 H(+). In terms of biological role, allows the formation of correctly charged Asn-tRNA(Asn) or Gln-tRNA(Gln) through the transamidation of misacylated Asp-tRNA(Asn) or Glu-tRNA(Gln) in organisms which lack either or both of asparaginyl-tRNA or glutaminyl-tRNA synthetases. The reaction takes place in the presence of glutamine and ATP through an activated phospho-Asp-tRNA(Asn) or phospho-Glu-tRNA(Gln). The chain is Aspartyl/glutamyl-tRNA(Asn/Gln) amidotransferase subunit B from Francisella tularensis subsp. novicida (strain U112).